The primary structure comprises 372 residues: 7-methylxanthosine synthase 1 (372 aa).

Position 18 (Tyr18) interacts with S-adenosyl-L-homocysteine. Xanthosine-binding residues include Asn21 and Asn25. 7 residues coordinate S-adenosyl-L-homocysteine: Cys62, Asn67, Asp101, Leu102, Ser140, Phe141, and Cys157. Tyr158 serves as a coordination point for xanthosine. Residue Cys159 participates in S-adenosyl-L-homocysteine binding. Residues Gln161 and Trp162 each contribute to the xanthosine site. Mg(2+) contacts are provided by Asn179, Asp261, Phe263, and Asn264. Xanthosine contacts are provided by Ser316, Tyr321, and Tyr356.

Belongs to the methyltransferase superfamily. Type-7 methyltransferase family. Mg(2+) is required as a cofactor. Expressed in stems, young leaves, floral buds, developing endosperm and immature fruits (grains). Detected in roots and old leaves, but not in mature fruits.

It catalyses the reaction xanthosine + S-adenosyl-L-methionine = 7-methylxanthosine + S-adenosyl-L-homocysteine. The protein operates within alkaloid biosynthesis. Involved in the biosynthesis of caffeine. Specific for xanthosine and could not use xanthosine 5'-monophosphate (XMP) as substrate. Catalyzes the 7-N-methylation activity of xanthosine, but does not have 1-N- or 3-N-methylation activity. In Coffea arabica (Arabian coffee), this protein is 7-methylxanthosine synthase 1.